The following is a 178-amino-acid chain: Acireductone dioxygenase (178 aa).

Fe(2+)-binding residues include His-100, His-102, Glu-106, and His-145. 4 residues coordinate Ni(2+): His-100, His-102, Glu-106, and His-145.

Belongs to the acireductone dioxygenase (ARD) family. Monomer. Requires Fe(2+) as cofactor. It depends on Ni(2+) as a cofactor.

It catalyses the reaction 1,2-dihydroxy-5-(methylsulfanyl)pent-1-en-3-one + O2 = 3-(methylsulfanyl)propanoate + CO + formate + 2 H(+). It carries out the reaction 1,2-dihydroxy-5-(methylsulfanyl)pent-1-en-3-one + O2 = 4-methylsulfanyl-2-oxobutanoate + formate + 2 H(+). It participates in amino-acid biosynthesis; L-methionine biosynthesis via salvage pathway; L-methionine from S-methyl-5-thio-alpha-D-ribose 1-phosphate: step 5/6. Catalyzes 2 different reactions between oxygen and the acireductone 1,2-dihydroxy-3-keto-5-methylthiopentene (DHK-MTPene) depending upon the metal bound in the active site. Fe-containing acireductone dioxygenase (Fe-ARD) produces formate and 2-keto-4-methylthiobutyrate (KMTB), the alpha-ketoacid precursor of methionine in the methionine recycle pathway. Ni-containing acireductone dioxygenase (Ni-ARD) produces methylthiopropionate, carbon monoxide and formate, and does not lie on the methionine recycle pathway. The sequence is that of Acireductone dioxygenase from Bacillus velezensis (strain DSM 23117 / BGSC 10A6 / LMG 26770 / FZB42) (Bacillus amyloliquefaciens subsp. plantarum).